Reading from the N-terminus, the 118-residue chain is Large ribosomal subunit protein bL19 (118 aa).

This sequence belongs to the bacterial ribosomal protein bL19 family.

This protein is located at the 30S-50S ribosomal subunit interface and may play a role in the structure and function of the aminoacyl-tRNA binding site. In Helicobacter pylori (strain J99 / ATCC 700824) (Campylobacter pylori J99), this protein is Large ribosomal subunit protein bL19 (rplS).